The chain runs to 408 residues: Guanine nucleotide-binding protein alpha-14 subunit (408 aa).

GTP-binding positions include 38 to 45 (HSEELEAK), 78 to 85 (GGPSSGKS), 201 to 205 (NRISK), 216 to 222 (VHSRKAT), 241 to 245 (DVGGQ), 285 to 288 (FPNF), 325 to 328 (NKVD), and Ala380. One can recognise a G-alpha domain in the interval 70-408 (SHIKILILGG…KANSKATGLS (339 aa)). The segment at 73–86 (KILILGGPSSGKST) is G1 motif. Ser85 contacts Mg(2+). The G2 motif stretch occupies residues 214–222 (DIVHSRKAT). Thr222 serves as a coordination point for Mg(2+). Residues 237-246 (LLMVDVGGQR) are G3 motif. Residues 321 to 328 (LLFFNKVD) are G4 motif. A G5 motif region spans residues 378–383 (TTATNT).

It belongs to the G-alpha family. In terms of assembly, g proteins are composed of 3 units; alpha, beta and gamma. The alpha chain contains the guanine nucleotide binding site.

In terms of biological role, guanine nucleotide-binding proteins (G proteins) are involved as modulators or transducers in various transmembrane signaling systems. In Caenorhabditis briggsae, this protein is Guanine nucleotide-binding protein alpha-14 subunit (gpa-14).